Here is a 159-residue protein sequence, read N- to C-terminus: Transcription elongation factor GreA (159 aa).

The protein belongs to the GreA/GreB family.

In terms of biological role, necessary for efficient RNA polymerase transcription elongation past template-encoded arresting sites. The arresting sites in DNA have the property of trapping a certain fraction of elongating RNA polymerases that pass through, resulting in locked ternary complexes. Cleavage of the nascent transcript by cleavage factors such as GreA or GreB allows the resumption of elongation from the new 3'terminus. GreA releases sequences of 2 to 3 nucleotides. This is Transcription elongation factor GreA from Buchnera aphidicola subsp. Baizongia pistaciae (strain Bp).